Here is a 354-residue protein sequence, read N- to C-terminus: Uroporphyrinogen decarboxylase (354 aa).

Substrate contacts are provided by residues 27–31, F46, D77, Y154, T209, and H327; that span reads RQAGR.

It belongs to the uroporphyrinogen decarboxylase family. In terms of assembly, homodimer.

Its subcellular location is the cytoplasm. The enzyme catalyses uroporphyrinogen III + 4 H(+) = coproporphyrinogen III + 4 CO2. It participates in porphyrin-containing compound metabolism; protoporphyrin-IX biosynthesis; coproporphyrinogen-III from 5-aminolevulinate: step 4/4. Functionally, catalyzes the decarboxylation of four acetate groups of uroporphyrinogen-III to yield coproporphyrinogen-III. In Pseudomonas putida (strain ATCC 47054 / DSM 6125 / CFBP 8728 / NCIMB 11950 / KT2440), this protein is Uroporphyrinogen decarboxylase.